Here is a 204-residue protein sequence, read N- to C-terminus: Uracil-DNA glycosylase (204 aa).

Asp-47 acts as the Proton acceptor in catalysis.

It belongs to the uracil-DNA glycosylase (UDG) superfamily. UNG family.

It localises to the host nucleus. The enzyme catalyses Hydrolyzes single-stranded DNA or mismatched double-stranded DNA and polynucleotides, releasing free uracil.. Its function is as follows. Excises uracil residues from the DNA which can arise as a result of misincorporation of dUMP residues by DNA polymerase or deamination of cytosines. Therefore may reduce deleterious uracil incorporation into the viral genome, particularly in terminally differentiated cells which lack DNA repair enzymes. The protein is Uracil-DNA glycosylase (UL2) of Bos taurus (Bovine).